We begin with the raw amino-acid sequence, 245 residues long: 3-deoxy-manno-octulosonate cytidylyltransferase (245 aa).

This sequence belongs to the KdsB family.

Its subcellular location is the cytoplasm. The catalysed reaction is 3-deoxy-alpha-D-manno-oct-2-ulosonate + CTP = CMP-3-deoxy-beta-D-manno-octulosonate + diphosphate. The protein operates within nucleotide-sugar biosynthesis; CMP-3-deoxy-D-manno-octulosonate biosynthesis; CMP-3-deoxy-D-manno-octulosonate from 3-deoxy-D-manno-octulosonate and CTP: step 1/1. Its pathway is bacterial outer membrane biogenesis; lipopolysaccharide biosynthesis. Its function is as follows. Activates KDO (a required 8-carbon sugar) for incorporation into bacterial lipopolysaccharide in Gram-negative bacteria. This Rhodopseudomonas palustris (strain BisB18) protein is 3-deoxy-manno-octulosonate cytidylyltransferase.